We begin with the raw amino-acid sequence, 503 residues long: V-type proton ATPase subunit B (503 aa).

Arg-378 is an ATP binding site. Ser-491, Ser-492, Ser-502, and Ser-503 each carry phosphoserine.

The protein belongs to the ATPase alpha/beta chains family. V-ATPase is a heteromultimeric enzyme composed of a peripheral catalytic V1 complex (components A to H) attached to an integral membrane V0 proton pore complex (components: a, c, c', c'', d, e, f and VOA1). Interacts with rav1.

It is found in the vacuole membrane. In terms of biological role, non-catalytic subunit of the V1 complex of vacuolar(H+)-ATPase (V-ATPase), a multisubunit enzyme composed of a peripheral complex (V1) that hydrolyzes ATP and a membrane integral complex (V0) that translocates protons. V-ATPase is responsible for acidifying and maintaining the pH of intracellular compartments. The sequence is that of V-type proton ATPase subunit B from Schizosaccharomyces pombe (strain 972 / ATCC 24843) (Fission yeast).